Reading from the N-terminus, the 428-residue chain is Enolase 2 (428 aa).

Gln162 is a (2R)-2-phosphoglycerate binding site. Residue Glu204 is the Proton donor of the active site. The Mg(2+) site is built by Asp241, Glu285, and Asp312. The (2R)-2-phosphoglycerate site is built by Lys337, Arg366, Ser367, and Lys388. The active-site Proton acceptor is the Lys337.

Belongs to the enolase family. The cofactor is Mg(2+).

The protein resides in the cytoplasm. The protein localises to the secreted. It localises to the cell surface. It carries out the reaction (2R)-2-phosphoglycerate = phosphoenolpyruvate + H2O. It participates in carbohydrate degradation; glycolysis; pyruvate from D-glyceraldehyde 3-phosphate: step 4/5. In terms of biological role, catalyzes the reversible conversion of 2-phosphoglycerate (2-PG) into phosphoenolpyruvate (PEP). It is essential for the degradation of carbohydrates via glycolysis. This Lactobacillus johnsonii (strain CNCM I-12250 / La1 / NCC 533) protein is Enolase 2.